Here is a 628-residue protein sequence, read N- to C-terminus: U-box domain-containing protein 10 (628 aa).

One can recognise a U-box domain in the interval 242-316; the sequence is TIPEDFLCPI…SQWCTKHNIE (75 aa). 5 ARM repeats span residues 373–413, 415–454, 456–495, 497–537, and 539–578; these read TDNR…NLSI, EHNKELIMLAGAVTSIVLVLRAGSMEARENAAATLFSLSL, DENKIIIGASGAIMALVDLLQYGSVRGKKDAATALFNLCI, QGNK…VLAS, and QVAKTAILRANAIPPLIDCLQKDQPRNRENAAAILLCLCK.

The enzyme catalyses S-ubiquitinyl-[E2 ubiquitin-conjugating enzyme]-L-cysteine + [acceptor protein]-L-lysine = [E2 ubiquitin-conjugating enzyme]-L-cysteine + N(6)-ubiquitinyl-[acceptor protein]-L-lysine.. It participates in protein modification; protein ubiquitination. In terms of biological role, functions as an E3 ubiquitin ligase. The protein is U-box domain-containing protein 10 (PUB10) of Arabidopsis thaliana (Mouse-ear cress).